The primary structure comprises 439 residues: MHKVTKFAIRHLSDKASRFVPKAGVYPKGYAVGGIHCGVKKDGKSLDLAILQNTFGKNASAAGVFTVNKFKAAPVQVSKKILKEKSGSGINSFVINSGNANAVTGAQGMKDAEDMVLVTDSVLENPTNSSLVMSTGVIGNNLPIDKILGGIPKLASQHLGNTHQHWIDCATAICTTDTFPKLVTKRFSIGDDTYTLAGLCKGAGMICPNMATLLGFFVTDAPVTPSALQQILKYAVDRSFNSITVDGDMSTNDTIVAMANGAAGGEVIDNTSSCAERYSRLQAEIVDFAQQLAQLVVRDGEGATKFITIRVKDALSYKDAKSIASSIANSSLFKTAMYGKDANWGRILCAIGYADVTSANSVIPEKTSVKFVPVDGSEHLNLLVNGEPEQVDEERASEILQNEDLIVEINLGTNGGQSADFWTCDLSHEYVTINGDYRS.

Substrate is bound by residues Thr175, Lys201, Thr212, Glu301, Asn434, and Ser439. Thr212 (nucleophile) is an active-site residue.

This sequence belongs to the ArgJ family. Heterodimer of an alpha and a beta chain. In terms of processing, the alpha and beta chains are autoproteolytically processed from a single precursor protein within the mitochondrion.

The protein resides in the mitochondrion matrix. The enzyme catalyses N(2)-acetyl-L-ornithine + L-glutamate = N-acetyl-L-glutamate + L-ornithine. It catalyses the reaction L-glutamate + acetyl-CoA = N-acetyl-L-glutamate + CoA + H(+). It functions in the pathway amino-acid biosynthesis; L-arginine biosynthesis; L-ornithine and N-acetyl-L-glutamate from L-glutamate and N(2)-acetyl-L-ornithine (cyclic): step 1/1. The protein operates within amino-acid biosynthesis; L-arginine biosynthesis; N(2)-acetyl-L-ornithine from L-glutamate: step 1/4. Its function is as follows. Catalyzes two activities which are involved in the cyclic version of arginine biosynthesis: the synthesis of acetylglutamate from glutamate and acetyl-CoA, and of ornithine by transacetylation between acetylornithine and glutamate. In Candida albicans (strain WO-1) (Yeast), this protein is Arginine biosynthesis bifunctional protein ArgJ, mitochondrial.